We begin with the raw amino-acid sequence, 406 residues long: Peptidase T (406 aa).

His82 is a binding site for Zn(2+). Asp84 is a catalytic residue. Residue Asp142 participates in Zn(2+) binding. Glu176 acts as the Proton acceptor in catalysis. Residues Glu177, Asp199, and His381 each coordinate Zn(2+).

Belongs to the peptidase M20B family. The cofactor is Zn(2+).

The protein resides in the cytoplasm. The enzyme catalyses Release of the N-terminal residue from a tripeptide.. Cleaves the N-terminal amino acid of tripeptides. The sequence is that of Peptidase T from Streptococcus agalactiae serotype III (strain NEM316).